The chain runs to 328 residues: Tryptophan--tRNA ligase (328 aa).

Residues arginine 8 to threonine 10 and glycine 16 to histidine 17 contribute to the ATP site. Residues proline 9–histidine 17 carry the 'HIGH' region motif. Aspartate 136 lines the L-tryptophan pocket. ATP is bound by residues glycine 148–aspartate 150, leucine 186, and lysine 193–serine 197. The short motif at lysine 193–serine 197 is the 'KMSKS' region element.

It belongs to the class-I aminoacyl-tRNA synthetase family. As to quaternary structure, homodimer.

The protein localises to the cytoplasm. The enzyme catalyses tRNA(Trp) + L-tryptophan + ATP = L-tryptophyl-tRNA(Trp) + AMP + diphosphate + H(+). Its function is as follows. Catalyzes the attachment of tryptophan to tRNA(Trp). The polypeptide is Tryptophan--tRNA ligase (Thermotoga maritima (strain ATCC 43589 / DSM 3109 / JCM 10099 / NBRC 100826 / MSB8)).